Here is a 250-residue protein sequence, read N- to C-terminus: 3-deoxy-manno-octulosonate cytidylyltransferase (250 aa).

Belongs to the KdsB family.

Its subcellular location is the cytoplasm. It catalyses the reaction 3-deoxy-alpha-D-manno-oct-2-ulosonate + CTP = CMP-3-deoxy-beta-D-manno-octulosonate + diphosphate. The protein operates within nucleotide-sugar biosynthesis; CMP-3-deoxy-D-manno-octulosonate biosynthesis; CMP-3-deoxy-D-manno-octulosonate from 3-deoxy-D-manno-octulosonate and CTP: step 1/1. Its pathway is bacterial outer membrane biogenesis; lipopolysaccharide biosynthesis. In terms of biological role, activates KDO (a required 8-carbon sugar) for incorporation into bacterial lipopolysaccharide in Gram-negative bacteria. The polypeptide is 3-deoxy-manno-octulosonate cytidylyltransferase (Francisella tularensis subsp. tularensis (strain FSC 198)).